A 318-amino-acid polypeptide reads, in one-letter code: Ribose-phosphate pyrophosphokinase 1 (318 aa).

ATP contacts are provided by residues 43 to 45 and 102 to 103; these read DGE and RQ. Residues H136 and D176 each contribute to the Mg(2+) site. K199 is a catalytic residue. D-ribose 5-phosphate is bound by residues R201, D225, and 229–233; that span reads DTAGT.

The protein belongs to the ribose-phosphate pyrophosphokinase family. Class I subfamily. Homohexamer. Requires Mg(2+) as cofactor.

It localises to the cytoplasm. It carries out the reaction D-ribose 5-phosphate + ATP = 5-phospho-alpha-D-ribose 1-diphosphate + AMP + H(+). It functions in the pathway metabolic intermediate biosynthesis; 5-phospho-alpha-D-ribose 1-diphosphate biosynthesis; 5-phospho-alpha-D-ribose 1-diphosphate from D-ribose 5-phosphate (route I): step 1/1. Its function is as follows. Involved in the biosynthesis of the central metabolite phospho-alpha-D-ribosyl-1-pyrophosphate (PRPP) via the transfer of pyrophosphoryl group from ATP to 1-hydroxyl of ribose-5-phosphate (Rib-5-P). In Listeria innocua serovar 6a (strain ATCC BAA-680 / CLIP 11262), this protein is Ribose-phosphate pyrophosphokinase 1.